Consider the following 233-residue polypeptide: Probable dihydroorotate dehydrogenase B (NAD(+)), electron transfer subunit (233 aa).

One can recognise an FAD-binding FR-type domain in the interval 1–87; the sequence is MYRVVTIEEV…RGPYGHGFIK (87 aa). Positions 202, 207, 210, and 218 each coordinate [2Fe-2S] cluster.

Belongs to the PyrK family. Heterotetramer of 2 PyrK and 2 PyrD type B subunits. Requires [2Fe-2S] cluster as cofactor. It depends on FAD as a cofactor.

The protein operates within pyrimidine metabolism; UMP biosynthesis via de novo pathway; orotate from (S)-dihydroorotate (NAD(+) route): step 1/1. Responsible for channeling the electrons from the oxidation of dihydroorotate from the FMN redox center in the PyrD type B subunit to the ultimate electron acceptor NAD(+). The protein is Probable dihydroorotate dehydrogenase B (NAD(+)), electron transfer subunit of Thermococcus kodakarensis (strain ATCC BAA-918 / JCM 12380 / KOD1) (Pyrococcus kodakaraensis (strain KOD1)).